The chain runs to 145 residues: Maximins 3/H9 type 1 (145 aa).

The signal sequence occupies residues 1–18 (MNFKYIVAVSFLIASAYA). Propeptides lie at residues 19–43 (RSVQ…LREI) and 74–124 (RTAE…KEKR). Ile-144 carries the post-translational modification Isoleucine amide.

This sequence belongs to the bombinin family. Expressed by the skin glands.

The protein resides in the secreted. Functionally, maximin-3 shows antibacterial activity against both Gram-positive and Gram-negative bacteria. It also shows antimicrobial activity against the fungus C.albicans, but not against A.flavus nor P.uticale. It has little hemolytic activity. It possess a significant cytotoxicity against tumor cell lines. It possess a significant anti-HIV activity. It shows high spermicidal activity. Its function is as follows. Maximin-H9 shows antimicrobial activity against bacteria and against the fungus C.albicans. Shows strong hemolytic activity. This is Maximins 3/H9 type 1 from Bombina maxima (Giant fire-bellied toad).